The primary structure comprises 352 residues: PDZ and LIM domain protein 2 (352 aa).

Residues 1–84 (MALTVDVAGP…PLRLQLDRSQ (84 aa)) enclose the PDZ domain. Disordered regions lie at residues 67–97 (SKIR…DSSL) and 111–149 (YTES…TGEA). Over residues 81–95 (DRSQATSPGQTNGDS) the composition is skewed to polar residues. Over residues 111-135 (YTESQSSLRSSYSSPTSLSPRAGSP) the composition is skewed to low complexity. Ser124 is subject to Phosphoserine. Thr126 carries the phosphothreonine modification. A phosphoserine mark is found at Ser127, Ser129, Ser134, Ser137, Ser143, Ser161, Ser197, Ser203, Ser213, and Ser266. The interval 170–213 (LSYSGRPGSRQAGLGRAGDSAVLVLPPSPGPRSSRPSMDSEGGS) is disordered. Residues 284 to 344 (HTCEKCSTSI…EKHARQRYSA (61 aa)) enclose the LIM zinc-binding domain.

In terms of assembly, interacts with alpha-actinins ACTN1 and ACTN4, FLNA and MYH9. Interacts (via LIM zinc-binding domain) with MKRN2.

It localises to the cytoplasm. The protein resides in the nucleus. It is found in the cytoskeleton. In terms of biological role, probable adapter protein located at the actin cytoskeleton that promotes cell attachment. Necessary for the migratory capacity of epithelial cells. Overexpression enhances cell adhesion to collagen and fibronectin and suppresses anchorage independent growth. May contribute to tumor cell migratory capacity. The protein is PDZ and LIM domain protein 2 (PDLIM2) of Homo sapiens (Human).